We begin with the raw amino-acid sequence, 146 residues long: Phospholipase A2 147 (146 aa).

The N-terminal stretch at 1 to 19 is a signal peptide; sequence MYPAHLLVLLAVCVSLLGA. The propeptide occupies 20–27; that stretch reads ASVPPQPL. 7 disulfides stabilise this stretch: C38–C98, C54–C145, C56–C72, C71–C126, C78–C119, C87–C112, and C105–C117. The Ca(2+) site is built by Y55, G57, and G59. H75 is an active-site residue. D76 is a binding site for Ca(2+). D120 is a catalytic residue.

It belongs to the phospholipase A2 family. Group I subfamily. D49 sub-subfamily. The cofactor is Ca(2+). Expressed by the venom gland.

Its subcellular location is the secreted. It carries out the reaction a 1,2-diacyl-sn-glycero-3-phosphocholine + H2O = a 1-acyl-sn-glycero-3-phosphocholine + a fatty acid + H(+). Its function is as follows. Snake venom phospholipase A2 (PLA2) that inhibits collagen-induced platelet aggregation. PLA2 catalyzes the calcium-dependent hydrolysis of the 2-acyl groups in 3-sn-phosphoglycerides. In Drysdalia coronoides (White-lipped snake), this protein is Phospholipase A2 147.